Consider the following 182-residue polypeptide: Vacuolar protein sorting-associated protein 29 (182 aa).

Lys-50 is subject to N6-acetyllysine.

The protein belongs to the VPS29 family. As to quaternary structure, component of the commander complex consisting of the CCC subcomplex and the retriever subcomplex. Component of the heterotrimeric retriever complex formed by VPS26C, VPS29 and VPS35L; within the complex interacts with VPS35L. Component of the heterotrimeric retromer cargo-selective complex (CSC), also described as vacuolar protein sorting subcomplex (VPS), formed by VPS26 (VPS26A or VPS26B), VPS29 and VPS35. The CSC has a highly elongated structure with VPS26 and VPS29 binding independently at opposite distal ends of VPS35 as central platform. The CSC is believed to associate with variable sorting nexins to form functionally distinct retromer complex variants. The originally described retromer complex (also called SNX-BAR retromer) is a pentamer containing the CSC and a heterodimeric membrane-deforming subcomplex formed between SNX1 or SNX2 and SNX5 or SNX6 (also called SNX-BAR subcomplex); the respective CSC and SNX-BAR subcomplexes associate with low affinity. The CSC associates with SNX3 to form a SNX3-retromer complex. The CSC associates with SNX27, the WASH complex and the SNX-BAR subcomplex to form the SNX27-retromer complex. Interacts with VPS26A, VPS35, SNX1, SNX2, SNX3, SNX27, WASHC5. Interacts with TBC1D5; this interaction is blocked by VPS35L in the retriever complex. Interacts with SNX17; the interaction is indirect; SNX17 (via its C-terminus) interacts with the retriever complex (via VPS26C and VPS35L). Interacts with VPS26B and ANKRD27.

It is found in the cytoplasm. The protein resides in the membrane. It localises to the endosome membrane. The protein localises to the early endosome. Its subcellular location is the late endosome. Component of the commander complex that is essential for endosomal recycling of transmembrane cargos; the commander complex is composed of the CCC subcomplex and the retriever subcomplex. Component of the retriever complex, which is a heterotrimeric complex related to retromer cargo-selective complex (CSC) and essential for retromer-independent retrieval and recycling of numerous cargos such as integrin alpha-5/beta-1 (ITGA5:ITGB1). Component of the retromer cargo-selective complex (CSC). The CSC is believed to be the core functional component of retromer or respective retromer complex variants acting to prevent missorting of selected transmembrane cargo proteins into the lysosomal degradation pathway. The recruitment of the CSC to the endosomal membrane involves RAB7A and SNX3. The SNX-BAR retromer mediates retrograde transport of cargo proteins from endosomes to the trans-Golgi network (TGN) and is involved in endosome-to-plasma membrane transport for cargo protein recycling. The SNX3-retromer mediates the retrograde endosome-to-TGN transport of WLS distinct from the SNX-BAR retromer pathway. The SNX27-retromer is believed to be involved in endosome-to-plasma membrane trafficking and recycling of a broad spectrum of cargo proteins. The CSC seems to act as recruitment hub for other proteins, such as the WASH complex and TBC1D5. Required to regulate transcytosis of the polymeric immunoglobulin receptor (pIgR-pIgA). In the endosomes, retriever complex drives the retrieval and recycling of NxxY-motif-containing cargo proteins by coupling to SNX17, a cargo essential for the homeostatic maintenance of numerous cell surface proteins associated with processes that include cell migration, cell adhesion, nutrient supply and cell signaling. The recruitment of the retriever complex to the endosomal membrane involves CCC and WASH complexes. Involved in GLUT1 endosome-to-plasma membrane trafficking; the function is dependent of association with ANKRD27. The protein is Vacuolar protein sorting-associated protein 29 of Rattus norvegicus (Rat).